A 340-amino-acid chain; its full sequence is Ferrochelatase (340 aa).

Fe cation-binding residues include histidine 189 and glutamate 292.

This sequence belongs to the ferrochelatase family.

The protein resides in the cytoplasm. The catalysed reaction is heme b + 2 H(+) = protoporphyrin IX + Fe(2+). The protein operates within porphyrin-containing compound metabolism; protoheme biosynthesis; protoheme from protoporphyrin-IX: step 1/1. Functionally, catalyzes the ferrous insertion into protoporphyrin IX. This chain is Ferrochelatase, found in Ectopseudomonas mendocina (strain ymp) (Pseudomonas mendocina).